A 299-amino-acid polypeptide reads, in one-letter code: UBX domain-containing protein 1 (299 aa).

3 disordered regions span residues 39-61, 127-176, and 191-218; these read AGVPMETDAPAQAAPGAADSGAP, KAKL…NEDE, and EARKAKASGQPVPEAKPAPSAAPVAPPK. Over residues 46–61 the composition is skewed to low complexity; sequence DAPAQAAPGAADSGAP. Positions 111-179 form a coiled coil; the sequence is AKVLEIREKI…REKNEDEIAR (69 aa). Over residues 128 to 176 the composition is skewed to basic and acidic residues; sequence AKLEAEENREKEKKRREDGKAMISHKEAARDREIREAAQDRRREKNEDE. The span at 201–213 shows a compositional bias: low complexity; the sequence is PVPEAKPAPSAAP. The UBX domain maps to 218-295; the sequence is KDYSTTTLQF…NLVPSANVIL (78 aa).

In terms of assembly, interacts with cdc-48.1 (via N-terminus) and cdc-48.2 (via N-terminus) in vitro; the interaction with cdc-48.1 is not detected in vivo. As to expression, expressed in the germline (at protein level). Expressed in spermatocytes but not in mature sperm (at protein level). Ubiquitously expressed. Predominantly expressed in the spermatheca.

The protein localises to the cytoplasm. The protein resides in the perinuclear region. In terms of biological role, ubiquitin-binding protein which acts as an adapter for ATPase cdc-48.1 and/or cdc-48.2, conferring substrate specificity. Together with ubxn-2 and ubxn-3, plays a role in hermaphrodite spermatogenesis probably by promoting the degradation of sex determination terminal factor tra-1. The protein is UBX domain-containing protein 1 of Caenorhabditis elegans.